We begin with the raw amino-acid sequence, 88 residues long: Small ribosomal subunit protein uS17 (88 aa).

This sequence belongs to the universal ribosomal protein uS17 family. In terms of assembly, part of the 30S ribosomal subunit.

Its function is as follows. One of the primary rRNA binding proteins, it binds specifically to the 5'-end of 16S ribosomal RNA. This chain is Small ribosomal subunit protein uS17, found in Yersinia pseudotuberculosis serotype O:1b (strain IP 31758).